We begin with the raw amino-acid sequence, 136 residues long: Large ribosomal subunit protein uL16 (136 aa).

This sequence belongs to the universal ribosomal protein uL16 family. In terms of assembly, part of the 50S ribosomal subunit.

Functionally, binds 23S rRNA and is also seen to make contacts with the A and possibly P site tRNAs. This Orientia tsutsugamushi (strain Boryong) (Rickettsia tsutsugamushi) protein is Large ribosomal subunit protein uL16.